The sequence spans 398 residues: Isopenicillin N epimerase (398 aa).

Residue Lys217 is modified to N6-(pyridoxal phosphate)lysine.

Belongs to the class-V pyridoxal-phosphate-dependent aminotransferase family. The cofactor is pyridoxal 5'-phosphate.

The catalysed reaction is isopenicillin N = penicillin N. It participates in antibiotic biosynthesis; cephalosporin C biosynthesis. Its function is as follows. Catalyzes the reversible isomerization between isopenicillin N and penicillin N. The chain is Isopenicillin N epimerase (cefD) from Streptomyces clavuligerus.